The sequence spans 380 residues: Erythronate-4-phosphate dehydrogenase (380 aa).

Substrate-binding residues include Ser45 and Thr66. Residues 126–127 (QV), Asp146, Thr175, 206–208 (ASR), and Asp232 contribute to the NAD(+) site. Arg208 is an active-site residue. Residue Glu237 is part of the active site. Residue His254 is the Proton donor of the active site. Gly257 lines the NAD(+) pocket. Tyr258 is a binding site for substrate.

Belongs to the D-isomer specific 2-hydroxyacid dehydrogenase family. PdxB subfamily. As to quaternary structure, homodimer.

It is found in the cytoplasm. It carries out the reaction 4-phospho-D-erythronate + NAD(+) = (R)-3-hydroxy-2-oxo-4-phosphooxybutanoate + NADH + H(+). It participates in cofactor biosynthesis; pyridoxine 5'-phosphate biosynthesis; pyridoxine 5'-phosphate from D-erythrose 4-phosphate: step 2/5. Its function is as follows. Catalyzes the oxidation of erythronate-4-phosphate to 3-hydroxy-2-oxo-4-phosphonooxybutanoate. In Pseudomonas aeruginosa (strain UCBPP-PA14), this protein is Erythronate-4-phosphate dehydrogenase.